The sequence spans 576 residues: Alpha-1,3-arabinosyltransferase XAT3 (576 aa).

Residues 1-19 (MKAGERPKLVRGVRQESRR) lie on the Cytoplasmic side of the membrane. Residues 20–40 (FRLLVIVVGFFLVSLTFVFVS) traverse the membrane as a helical; Signal-anchor for type II membrane protein segment. The Lumenal portion of the chain corresponds to 41–576 (KPDAILFSLN…LLEALDNLNP (536 aa)). The segment at 64-171 (IQQKVNEPSG…KHKVTLPTVS (108 aa)) is disordered. 3 stretches are compositionally biased toward basic and acidic residues: residues 73–98 (GESRKTSTDALRGDPKVVDDEADAKP), 126–138 (THNKDGNGHKSHQ), and 147–163 (GESKGNDEEGEHAEQKH). 3 N-linked (GlcNAc...) asparagine glycosylation sites follow: Asn-172, Asn-375, and Asn-443.

Belongs to the glycosyltransferase 61 family.

Its subcellular location is the golgi apparatus membrane. It functions in the pathway glycan metabolism. Its function is as follows. Glycosyltransferase involved in the arabinosylation of xylan, the major hemicellulose (non-cellulosic component) of primary and secondary walls of angiosperms. Possesses alpha-1,3-arabinosyltransferase activity, transferring an arabinofuranose residue to the xylan backbone. The sequence is that of Alpha-1,3-arabinosyltransferase XAT3 from Oryza sativa subsp. japonica (Rice).